Consider the following 98-residue polypeptide: Co-chaperonin GroES 5 (98 aa).

This sequence belongs to the GroES chaperonin family. In terms of assembly, heptamer of 7 subunits arranged in a ring. Interacts with the chaperonin GroEL.

The protein resides in the cytoplasm. Functionally, together with the chaperonin GroEL, plays an essential role in assisting protein folding. The GroEL-GroES system forms a nano-cage that allows encapsulation of the non-native substrate proteins and provides a physical environment optimized to promote and accelerate protein folding. GroES binds to the apical surface of the GroEL ring, thereby capping the opening of the GroEL channel. The protein is Co-chaperonin GroES 5 of Mesorhizobium japonicum (strain LMG 29417 / CECT 9101 / MAFF 303099) (Mesorhizobium loti (strain MAFF 303099)).